Here is a 234-residue protein sequence, read N- to C-terminus: HTH-type transcriptional repressor FabR (234 aa).

Positions 29-89 (KTRRSLVEAA…TMVDESGLML (61 aa)) constitute an HTH tetR-type domain. Residues 52–71 (SLREVAREAGIAPTSFYRHF) constitute a DNA-binding region (H-T-H motif).

As to quaternary structure, homodimer.

It localises to the cytoplasm. Has been suggested to require either an unsaturated acyl carrier protein or unsaturated acyl-CoA (but not their saturated equivalents) for DNA-binding. Another group suggests that unsaturated thioesters are not essential but act instead to enhance DNA-binding. Functionally, binds the promoter region of at least fabA and fabB, but probably not yqfA. Represses the transcription of fabA and fabB, involved in unsaturated fatty acid (UFA) biosynthesis. By controlling UFA production, FabR directly influences the physical properties of the membrane bilayer. In Escherichia coli (strain K12), this protein is HTH-type transcriptional repressor FabR.